Reading from the N-terminus, the 345-residue chain is Protein RecA (345 aa).

Position 65–72 (65–72 (GPESSGKT)) interacts with ATP.

It belongs to the RecA family.

Its subcellular location is the cytoplasm. In terms of biological role, can catalyze the hydrolysis of ATP in the presence of single-stranded DNA, the ATP-dependent uptake of single-stranded DNA by duplex DNA, and the ATP-dependent hybridization of homologous single-stranded DNAs. It interacts with LexA causing its activation and leading to its autocatalytic cleavage. The protein is Protein RecA of Campylobacter fetus subsp. fetus (strain 82-40).